A 372-amino-acid chain; its full sequence is Glutamate 5-kinase (372 aa).

Lys14 contributes to the ATP binding site. Substrate contacts are provided by Ser54, Asp141, and Asn153. Residue 173-174 coordinates ATP; it reads TD. One can recognise a PUA domain in the interval 280-358; sequence RGTLVLDAGA…DAIESLLGYS (79 aa).

The protein belongs to the glutamate 5-kinase family.

Its subcellular location is the cytoplasm. The enzyme catalyses L-glutamate + ATP = L-glutamyl 5-phosphate + ADP. It functions in the pathway amino-acid biosynthesis; L-proline biosynthesis; L-glutamate 5-semialdehyde from L-glutamate: step 1/2. In terms of biological role, catalyzes the transfer of a phosphate group to glutamate to form L-glutamate 5-phosphate. This is Glutamate 5-kinase from Pseudomonas putida (strain W619).